We begin with the raw amino-acid sequence, 272 residues long: Putative protein-disulfide oxidoreductase RP025 (272 aa).

Residues 1–21 (MRNIFIVLIFLFLSNCSEVKA) form the signal peptide. One can recognise a Thioredoxin domain in the interval 74-263 (DSREQKKPEI…ISKAVDKALD (190 aa)). Cysteine 116 and cysteine 119 are oxidised to a cystine.

It belongs to the thioredoxin family. DsbA subfamily.

It localises to the periplasm. In terms of biological role, may be required for disulfide bond formation in some proteins. In Rickettsia prowazekii (strain Madrid E), this protein is Putative protein-disulfide oxidoreductase RP025.